Reading from the N-terminus, the 569-residue chain is Protein GPR108 (569 aa).

The N-terminal stretch at 1–34 (MAVSERRGLSGESPTQCRWGYLSLLVLTLSGCSG) is a signal peptide. N-linked (GlcNAc...) asparagine glycosylation is found at N59, N111, and N182. The tract at residues 144–219 (LLPEAPTQSG…DPSGKEKDQV (76 aa)) is disordered. A compositionally biased stretch (polar residues) spans 180 to 192 (KENQTAPQVSGDK). A compositionally biased stretch (basic and acidic residues) spans 194–203 (TPGEHRHSSE). N226 and N230 each carry an N-linked (GlcNAc...) asparagine glycan. A run of 7 helical transmembrane segments spans residues 289–309 (LYLIMSACFLAADIFWVSVLC), 318–338 (IHWLMAALAFTKSVSLLFHSI), 362–382 (LLKGALLFITIALIGSGWAFV), 393–413 (IFGIVIPLQVLANVAYIVIES), 427–447 (ILFLVDLICCGAILFPVVWSI), 475–495 (VMVICYIYFTRIIAILLQVAV), and 499–519 (WQWLYQLLVESSTLAFFVLTG).

Belongs to the LU7TM family. High expression in spleen, lung, stomach, large and small intestine, and thymus.

The protein localises to the golgi apparatus. Its subcellular location is the cis-Golgi network membrane. It localises to the trans-Golgi network membrane. The protein resides in the golgi apparatus membrane. May play a role in intracellular immune modulation by activating NF-kappaB response and attenuating Toll-like-receptor response. Functionally, (Microbial infection) Plays an essential function in adeno-associated virus (AAV) transduction, across multiple serotypes except AAV5. May play a critical role in mediating the endosomal virus escape or in the AAV virions trafficking from endosomes to the nucleus. The chain is Protein GPR108 (Gpr108) from Mus musculus (Mouse).